The following is a 366-amino-acid chain: Ferrochelatase (366 aa).

The Fe cation site is built by His210 and Glu293.

This sequence belongs to the ferrochelatase family.

The protein resides in the cytoplasm. It carries out the reaction heme b + 2 H(+) = protoporphyrin IX + Fe(2+). Its pathway is porphyrin-containing compound metabolism; protoheme biosynthesis; protoheme from protoporphyrin-IX: step 1/1. Functionally, catalyzes the ferrous insertion into protoporphyrin IX. The protein is Ferrochelatase of Leptospira borgpetersenii serovar Hardjo-bovis (strain L550).